The primary structure comprises 66 residues: Large ribosomal subunit protein bL35c (66 aa).

It belongs to the bacterial ribosomal protein bL35 family.

It localises to the plastid. The protein resides in the chloroplast. The sequence is that of Large ribosomal subunit protein bL35c from Guillardia theta (Cryptophyte).